We begin with the raw amino-acid sequence, 596 residues long: Succinate dehydrogenase flavoprotein subunit (596 aa).

FAD-binding positions include Gly18–Gly23, Ser41–Gly56, and Asp225. Residue His49 is modified to Tele-8alpha-FAD histidine. Substrate contacts are provided by His246 and Thr258. The active-site Proton acceptor is Arg290. His357 is a binding site for substrate. FAD is bound at residue Glu391. A substrate-binding site is contributed by Arg402. Residue Ser407–Leu408 participates in FAD binding.

It belongs to the FAD-dependent oxidoreductase 2 family. FRD/SDH subfamily. In terms of assembly, part of an enzyme complex containing four subunits: a flavoprotein, an iron-sulfur, cytochrome b-556, and a hydrophobic anchor protein. The cofactor is FAD.

It is found in the cell inner membrane. It carries out the reaction a quinone + succinate = fumarate + a quinol. It functions in the pathway carbohydrate metabolism; tricarboxylic acid cycle; fumarate from succinate (bacterial route): step 1/1. This Rickettsia bellii (strain RML369-C) protein is Succinate dehydrogenase flavoprotein subunit (sdhA).